Reading from the N-terminus, the 1037-residue chain is Multidrug resistance protein MdtF (1037 aa).

Topologically, residues 1-9 (MANYFIDRP) are cytoplasmic. The helical transmembrane segment at 10-30 (VFAWVLAIIMMLAGGLAIMNL) threads the bilayer. The Periplasmic segment spans residues 31–338 (PVAQYPQIAP…TTPFIKISIQ (308 aa)). Residues 339-359 (EVFKTLVEAIILVFLVMYLFL) form a helical membrane-spanning segment. The Cytoplasmic segment spans residues 360 to 369 (QNFRATIIPT). A helical membrane pass occupies residues 370–390 (IAVPVVILGTFAILSAVGFTI). At 391-392 (NT) the chain is on the periplasmic side. Residues 393-413 (LTMFGMVLAIGLLVDDAIVVV) traverse the membrane as a helical segment. The Cytoplasmic portion of the chain corresponds to 414–440 (ENVERVIAEDKLPPKEATHKSMGQIQR). A helical transmembrane segment spans residues 441-461 (ALVGIAVVLSAVFMPMAFMSG). At 462–471 (ATGEIYRQFS) the chain is on the periplasmic side. A helical transmembrane segment spans residues 472 to 492 (ITLISSMLLSVFVAMSLTPAL). Residues 493 to 534 (CATILKAAPEGGHKPNALFARFNTLFEKSTQHYTDSTRSLLR) lie on the Cytoplasmic side of the membrane. A helical membrane pass occupies residues 535-555 (CTGRYMVVYLLICAGMAVLFL). Residues 556-870 (RTPTSFLPEE…SYQEALSSNQ (315 aa)) are Periplasmic-facing. The helical transmembrane segment at 871–891 (APALYAISLVVVFLALAALYE) threads the bilayer. A topological domain (cytoplasmic) is located at residue S892. A helical transmembrane segment spans residues 893-913 (WSIPFSVMLVVPLGVVGALLA). Residues 914 to 927 (TDLRGLSNDVYFQV) are Periplasmic-facing. The helical transmembrane segment at 928 to 948 (GLLTTIGLSAKNAILIVEFAV) threads the bilayer. The Cytoplasmic portion of the chain corresponds to 949 to 972 (EMMQKEGKTPVEAIIEAARMRLRP). The chain crosses the membrane as a helical span at residues 973-993 (ILMTSLAFILGVLPLVISHGA). Over 994–1006 (GSGAQNAVGTGVM) the chain is Periplasmic. Residues 1007-1027 (GGMFAATVLAIYFVPVFFVVV) form a helical membrane-spanning segment. Topologically, residues 1028–1037 (EHLFARFKKA) are cytoplasmic.

It belongs to the resistance-nodulation-cell division (RND) (TC 2.A.6) family. In terms of assembly, homotrimer. Part of the tripartite efflux system MdtEF-TolC, which is composed of an inner membrane transporter, MdtF, a membrane fusion protein, MdtE, and an outer membrane component, TolC. The complex forms a large protein conduit and can translocate molecules across both the inner and outer membranes.

Its subcellular location is the cell inner membrane. Part of the tripartite efflux system MdtEF-TolC, which confers resistance to various compounds. The sequence is that of Multidrug resistance protein MdtF (mdtF) from Escherichia coli O6:H1 (strain CFT073 / ATCC 700928 / UPEC).